Reading from the N-terminus, the 363-residue chain is Histidine biosynthesis bifunctional protein HisB (363 aa).

The interval 1 to 174 (MTQPTLFIDR…AVTNIGDRQP (174 aa)) is histidinol-phosphatase. Asp-9 functions as the Nucleophile in the catalytic mechanism. Residues Asp-9 and Asp-11 each coordinate Mg(2+). Catalysis depends on Asp-11, which acts as the Proton donor. Positions 92, 94, 100, and 102 each coordinate Zn(2+). Asp-129 contacts Mg(2+). The tract at residues 175–363 (RYAEVVRKTK…NELPSSKGVL (189 aa)) is imidazoleglycerol-phosphate dehydratase.

In the N-terminal section; belongs to the histidinol-phosphatase family. The protein in the C-terminal section; belongs to the imidazoleglycerol-phosphate dehydratase family. Mg(2+) serves as cofactor. It depends on Zn(2+) as a cofactor.

Its subcellular location is the cytoplasm. The catalysed reaction is D-erythro-1-(imidazol-4-yl)glycerol 3-phosphate = 3-(imidazol-4-yl)-2-oxopropyl phosphate + H2O. It carries out the reaction L-histidinol phosphate + H2O = L-histidinol + phosphate. It participates in amino-acid biosynthesis; L-histidine biosynthesis; L-histidine from 5-phospho-alpha-D-ribose 1-diphosphate: step 6/9. Its pathway is amino-acid biosynthesis; L-histidine biosynthesis; L-histidine from 5-phospho-alpha-D-ribose 1-diphosphate: step 8/9. The polypeptide is Histidine biosynthesis bifunctional protein HisB (Actinobacillus pleuropneumoniae serotype 5b (strain L20)).